We begin with the raw amino-acid sequence, 462 residues long: Gamma-glutamylethanolamide synthetase GlnA4 (462 aa).

A GS beta-grasp domain is found at 30 to 126 (GDIDTVVLAF…AVADLAWEDG (97 aa)). Positions 133 to 462 (PRQILRRQLE…WELRRSFERM (330 aa)) constitute a GS catalytic domain. The Mg(2+) site is built by glutamate 156 and glutamate 158. Glutamate 214 serves as a coordination point for ATP. Mg(2+)-binding residues include glutamate 219 and glutamate 226. Residue glycine 270 coordinates L-glutamate. Position 274 (histidine 274) interacts with Mg(2+). Residue 276 to 278 (HLS) participates in ATP binding. 2 residues coordinate L-glutamate: arginine 325 and arginine 343. ATP is bound by residues arginine 343 and arginine 348. A Mg(2+)-binding site is contributed by glutamate 359. Arginine 361 provides a ligand contact to L-glutamate.

The protein belongs to the glutamine synthetase family. The cofactor is Mg(2+).

The enzyme catalyses ethanolamine + L-glutamate + ATP = gamma-L-glutamylethanolamide + ADP + phosphate + H(+). The protein operates within amine and polyamine degradation; ethanolamine degradation. Its activity is regulated as follows. Very slightly decreased activity with glutamine synthetase (GS) inhibitor methionine sulfoximine (MSO). Functionally, involved in the catabolism of monoamine ethanolamine. Catalyzes the ATP-dependent gamma-glutamylation of ethanolamine. No activity with polyamines. No complementation of the L-glutamine auxotrophy of an E.coli glnA mutant. Enables survival of S.coelicolor under high local environmental ethanolamine conditions. May play a role during starvation conditions to limit intracellular ethanolamine concentration, which in excess is toxic to the cells. In Streptomyces coelicolor (strain ATCC BAA-471 / A3(2) / M145), this protein is Gamma-glutamylethanolamide synthetase GlnA4.